The primary structure comprises 398 residues: MLNSLDLAGRPQDTRVVVAMSGGVDSSATAALLKSQGYDVVGITLQLYDHGAATHRKGACCAGQDIHDARDVAERIGIPHYVLDYESRFRESVIDSFADSYALGETPVPCIECNRSVKFRDLLATARELGASALATGHYVSSRRLADGSRALICAADRDRDQSYFLFATTREQLDFLRFPLGDMTKPQTRDLARQFGLSVADKHDSQDICFVPTGRYTDVVERLKPNAMEPGEIVDLNGRVLGSHPGIVHFTVGQRRGLGIASRAPLYVLRLDAARRRVVVGPREALRMERIVLRDVNWIGDGALDRAVGDGLELFVRVRSTRAPQPAWLRAVKGGYEVELVAGEEGVSPGQACVFYDAAEGQARVLGGGFIKSAAPRSIAEPAHDDAASPALAAMRG.

Residues Ala19–Ser26 and Leu45 contribute to the ATP site. Residue Cys113 is the Nucleophile of the active site. A disulfide bridge links Cys113 with Cys210. Gly137 is an ATP binding site. The tract at residues Arg160–Gln162 is interaction with tRNA. Cys210 functions as the Cysteine persulfide intermediate in the catalytic mechanism.

It belongs to the MnmA/TRMU family.

Its subcellular location is the cytoplasm. It catalyses the reaction S-sulfanyl-L-cysteinyl-[protein] + uridine(34) in tRNA + AH2 + ATP = 2-thiouridine(34) in tRNA + L-cysteinyl-[protein] + A + AMP + diphosphate + H(+). In terms of biological role, catalyzes the 2-thiolation of uridine at the wobble position (U34) of tRNA, leading to the formation of s(2)U34. In Rhodopseudomonas palustris (strain HaA2), this protein is tRNA-specific 2-thiouridylase MnmA.